The primary structure comprises 453 residues: MIYILKNFIIILFFLLIILKRIESQSLPSLPSPTIYKSSQCRGDLVYRNVSNRMEDEKIGFTFVQYNGTYQSCVIPCPSPFFTLDEWNKFLYMSLVMGTISFLCGLFLLITYSPIVNKTHNRHTIGVMCMSFGVCLAMCSDMWNFGSNFTDQKSICPSPGQYLTTSNSRCLGSGIVLQFGGVFGFLNWTLLSFDLFMNIKGIITKNYDKYYFVATFIIAIIFTFVPIVNDQYSMSYIGLGCWLGSAVYQLIFFWILLSICLIVSSVFIILILKEIYIIIKQSKQKTSLKGNIRPLLCITVTSFAFFYMFFYYISIVIEGDYYERILNEYTDCLMDPTKDVSECKFPRMSVANEFVFLLCLRLLGIGAFIFYGINKEVKKIWLNSFWFNNSFVGKYIGSKRSMGNDITNSYASKAYSKNYNNNNSINSYNSGLELSIIDMSCNKDDNFKPIIIK.

The first 24 residues, 1 to 24 (MIYILKNFIIILFFLLIILKRIES), serve as a signal peptide directing secretion. Residues 25 to 89 (QSLPSLPSPT…PFFTLDEWNK (65 aa)) are Extracellular-facing. Residues N49 and N67 are each glycosylated (N-linked (GlcNAc...) asparagine). The chain crosses the membrane as a helical span at residues 90-110 (FLYMSLVMGTISFLCGLFLLI). The Cytoplasmic portion of the chain corresponds to 111–124 (TYSPIVNKTHNRHT). The helical transmembrane segment at 125–145 (IGVMCMSFGVCLAMCSDMWNF) threads the bilayer. Residues 146–170 (GSNFTDQKSICPSPGQYLTTSNSRC) lie on the Extracellular side of the membrane. N-linked (GlcNAc...) asparagine glycosylation is present at N148. The helical transmembrane segment at 171 to 191 (LGSGIVLQFGGVFGFLNWTLL) threads the bilayer. Residues 192-209 (SFDLFMNIKGIITKNYDK) are Cytoplasmic-facing. The helical transmembrane segment at 210–230 (YYFVATFIIAIIFTFVPIVND) threads the bilayer. Topologically, residues 231–250 (QYSMSYIGLGCWLGSAVYQL) are extracellular. The helical transmembrane segment at 251-271 (IFFWILLSICLIVSSVFIILI) threads the bilayer. Residues 272 to 296 (LKEIYIIIKQSKQKTSLKGNIRPLL) lie on the Cytoplasmic side of the membrane. A helical membrane pass occupies residues 297–317 (CITVTSFAFFYMFFYYISIVI). Topologically, residues 318 to 352 (EGDYYERILNEYTDCLMDPTKDVSECKFPRMSVAN) are extracellular. The helical transmembrane segment at 353 to 373 (EFVFLLCLRLLGIGAFIFYGI) threads the bilayer. Topologically, residues 374–453 (NKEVKKIWLN…DDNFKPIIIK (80 aa)) are cytoplasmic.

The protein belongs to the G-protein coupled receptor Fz/Smo family.

Its subcellular location is the membrane. This Dictyostelium discoideum (Social amoeba) protein is Frizzled/smoothened-like sans CRD protein G (fscG).